Here is a 504-residue protein sequence, read N- to C-terminus: Peroxisomal N(1)-acetyl-spermine/spermidine oxidase (504 aa).

FAD is bound by residues alanine 16, glutamate 37, arginine 45, and 61 to 62 (HW). Positions 64 and 187 each coordinate substrate. Valine 240 contacts FAD. Substrate is bound at residue asparagine 313. FAD contacts are provided by residues glutamate 465 and 474 to 475 (TT). The Microbody targeting signal motif lies at 502–504 (PRL).

Belongs to the flavin monoamine oxidase family. Monomer. FAD serves as cofactor. Widely expressed at different developmental stages. Expressed at high level in the liver and the stomach, expressed at lower level in heart, spleen, thymus, small intestine, muscle, pancreas, uterus, and breast and expressed at very low level in brain, kidney, lung, testis, skin, adrenal gland and prostate gland.

Its subcellular location is the peroxisome. It is found in the cytoplasm. It carries out the reaction N(1)-acetylspermine + O2 + H2O = 3-acetamidopropanal + spermidine + H2O2. The enzyme catalyses N(1)-acetylspermidine + O2 + H2O = 3-acetamidopropanal + putrescine + H2O2. It catalyses the reaction N(1),N(12)-diacetylspermine + O2 + H2O = 3-acetamidopropanal + N(1)-acetylspermidine + H2O2. It participates in amine and polyamine metabolism; spermine metabolism. Flavoenzyme which catalyzes the oxidation of N(1)-acetylspermine to spermidine and is thus involved in the polyamine back-conversion. Can also oxidize N(1)-acetylspermidine to putrescine. Substrate specificity: N(1)-acetylspermine = N(1)-acetylspermidine &gt; N(1),N(12)-diacylspermine &gt;&gt; spermine. Does not oxidize spermidine. Plays an important role in the regulation of polyamine intracellular concentration and has the potential to act as a determinant of cellular sensitivity to the antitumor polyamine analogs. The chain is Peroxisomal N(1)-acetyl-spermine/spermidine oxidase (Paox) from Mus musculus (Mouse).